The primary structure comprises 201 residues: FMN-dependent NADH:quinone oxidoreductase (201 aa).

Residues Ser10, 16–18 (SQS), 96–99 (MYNF), and 140–143 (SRGG) each bind FMN.

This sequence belongs to the azoreductase type 1 family. In terms of assembly, homodimer. Requires FMN as cofactor.

The catalysed reaction is 2 a quinone + NADH + H(+) = 2 a 1,4-benzosemiquinone + NAD(+). It carries out the reaction N,N-dimethyl-1,4-phenylenediamine + anthranilate + 2 NAD(+) = 2-(4-dimethylaminophenyl)diazenylbenzoate + 2 NADH + 2 H(+). In terms of biological role, quinone reductase that provides resistance to thiol-specific stress caused by electrophilic quinones. Functionally, also exhibits azoreductase activity. Catalyzes the reductive cleavage of the azo bond in aromatic azo compounds to the corresponding amines. In Escherichia coli O6:H1 (strain CFT073 / ATCC 700928 / UPEC), this protein is FMN-dependent NADH:quinone oxidoreductase.